We begin with the raw amino-acid sequence, 419 residues long: MAPILQRISKTFIKPSSPTPESLRCYNLSSSDQMITSVYISLAFFYGSPGCESSRIRQQLDNSLSRTLVYYYPFAGRLVDNDHIDCNDQGVQFVEVRIHCPISAILKQTTSYAEDLVFPRGTSACHEDSLVVVQLNRFECGGVAIAVCISHKVADGSGAIAFINDWAATARVSSHIPSPLLVADSIFPHLDNSLPVPYNLSKNCVTRRFVFPAAEIEKLKSKAVESGLQQPTRVEVVTALLYQCALLASRSTNSGLSRPSVLIQAVNLRPFLVPPLPRNSVGNIFSINFSIIEVDSLEFPELAGRLRKAKLKFQNLSQEKLYYDSQMQELGECLKQLNTGNFDVYYCSSWCRFPVYDVDFGWGKPTWVCTVKSQIKDMIVLMDSPGDEIAAFVTLEEEKMSAFQHNELLLSFASLYSAK.

His151 serves as the catalytic Proton acceptor. The short motif at 206–213 is the Nuclear localization signal element; it reads TRRFVFPA. The active-site Proton acceptor is the Asp359.

Belongs to the plant acyltransferase family. In terms of assembly, monomer.

It localises to the cytoplasm. Its subcellular location is the nucleus. The enzyme catalyses rhazimol + acetyl-CoA = akuammiline + CoA + H(+). It participates in alkaloid biosynthesis. In terms of biological role, acyltransferase involved in the biosynthesis of akuammilan monoterpene indole alkaloids (MIAs) natural products, components with various biological properties such as antidiabetic, antibacterial, anti-inflammatory, anticancer, and antimalarial activities. Catalyzes the conversion of rhazimol to akuammiline. The protein is Akuammiline synthase 1 of Alstonia scholaris (Dogbane).